Consider the following 439-residue polypeptide: tRNA-2-methylthio-N(6)-dimethylallyladenosine synthase (439 aa).

In terms of domain architecture, MTTase N-terminal spans 2–119 (KKLYLKTHGC…LPDLLDSVIQ (118 aa)). Residues C11, C48, C82, C156, C160, and C163 each coordinate [4Fe-4S] cluster. Residues 142 to 374 (RAEGPSAFVS…QNRINVKAAE (233 aa)) form the Radical SAM core domain. Residues 377-439 (QSMVGTQQRI…RPYSLWGEIC (63 aa)) form the TRAM domain.

It belongs to the methylthiotransferase family. MiaB subfamily. In terms of assembly, monomer. [4Fe-4S] cluster serves as cofactor.

The protein resides in the cytoplasm. The enzyme catalyses N(6)-dimethylallyladenosine(37) in tRNA + (sulfur carrier)-SH + AH2 + 2 S-adenosyl-L-methionine = 2-methylsulfanyl-N(6)-dimethylallyladenosine(37) in tRNA + (sulfur carrier)-H + 5'-deoxyadenosine + L-methionine + A + S-adenosyl-L-homocysteine + 2 H(+). Catalyzes the methylthiolation of N6-(dimethylallyl)adenosine (i(6)A), leading to the formation of 2-methylthio-N6-(dimethylallyl)adenosine (ms(2)i(6)A) at position 37 in tRNAs that read codons beginning with uridine. This is tRNA-2-methylthio-N(6)-dimethylallyladenosine synthase from Coxiella burnetii (strain Dugway 5J108-111).